The primary structure comprises 335 residues: Phosphate acyltransferase (335 aa).

It belongs to the PlsX family. As to quaternary structure, homodimer. Probably interacts with PlsY.

Its subcellular location is the cytoplasm. The enzyme catalyses a fatty acyl-[ACP] + phosphate = an acyl phosphate + holo-[ACP]. It participates in lipid metabolism; phospholipid metabolism. Its function is as follows. Catalyzes the reversible formation of acyl-phosphate (acyl-PO(4)) from acyl-[acyl-carrier-protein] (acyl-ACP). This enzyme utilizes acyl-ACP as fatty acyl donor, but not acyl-CoA. The protein is Phosphate acyltransferase of Clostridium botulinum (strain Loch Maree / Type A3).